A 284-amino-acid chain; its full sequence is AA14 family lytic polysaccharide monooxygenase B (284 aa).

An N-terminal signal peptide occupies residues 1–20; sequence MGYLSKLVTSVVFAIPLASA. N42, N96, N142, and N183 each carry an N-linked (GlcNAc...) asparagine glycan. Cysteines 197 and 218 form a disulfide.

It belongs to the polysaccharide monooxygenase AA14 family. Cu(2+) is required as a cofactor.

The protein resides in the secreted. Lytic polysaccharide monooxygenase (LPMO) that plays decomposes some specific network structures formed between cellulose and hemicellulose in the plant cell walls. Catalysis by LPMOs requires the reduction of the active-site copper from Cu(II) to Cu(I) by a reducing agent and H(2)O(2) or O(2) as a cosubstrate. The chain is AA14 family lytic polysaccharide monooxygenase B from Talaromyces rugulosus (Penicillium rugulosum).